Consider the following 166-residue polypeptide: Small ribosomal subunit protein uS5 (166 aa).

Residues 11–74 (LEDRVVAINR…DAARKNLIEV (64 aa)) form the S5 DRBM domain.

Belongs to the universal ribosomal protein uS5 family. As to quaternary structure, part of the 30S ribosomal subunit. Contacts proteins S4 and S8.

In terms of biological role, with S4 and S12 plays an important role in translational accuracy. Its function is as follows. Located at the back of the 30S subunit body where it stabilizes the conformation of the head with respect to the body. The chain is Small ribosomal subunit protein uS5 from Ligilactobacillus salivarius (strain UCC118) (Lactobacillus salivarius).